The following is a 149-amino-acid chain: Large ribosomal subunit protein uL13 (149 aa).

Belongs to the universal ribosomal protein uL13 family. In terms of assembly, part of the 50S ribosomal subunit.

This protein is one of the early assembly proteins of the 50S ribosomal subunit, although it is not seen to bind rRNA by itself. It is important during the early stages of 50S assembly. The polypeptide is Large ribosomal subunit protein uL13 (Chlorobium luteolum (strain DSM 273 / BCRC 81028 / 2530) (Pelodictyon luteolum)).